The primary structure comprises 909 residues: DNA mismatch repair protein MutS (909 aa).

Position 614–621 (614–621 (GPNMAGKS)) interacts with ATP. Residues 798 to 827 (LEENSPQNNDISKESSSSSNSHDKLESSVI) form a disordered region. A compositionally biased stretch (basic and acidic residues) spans 818 to 827 (SHDKLESSVI).

This sequence belongs to the DNA mismatch repair MutS family.

In terms of biological role, this protein is involved in the repair of mismatches in DNA. It is possible that it carries out the mismatch recognition step. This protein has a weak ATPase activity. In Clostridium novyi (strain NT), this protein is DNA mismatch repair protein MutS.